The following is a 346-amino-acid chain: Biotin synthase (346 aa).

The Radical SAM core domain maps to 38 to 256 (RQVQVSTLLS…IAVARIMMPT (219 aa)). The [4Fe-4S] cluster site is built by cysteine 53, cysteine 57, and cysteine 60. Residues cysteine 97, cysteine 128, cysteine 188, and arginine 260 each contribute to the [2Fe-2S] cluster site.

This sequence belongs to the radical SAM superfamily. Biotin synthase family. Homodimer. The cofactor is [4Fe-4S] cluster. It depends on [2Fe-2S] cluster as a cofactor.

It catalyses the reaction (4R,5S)-dethiobiotin + (sulfur carrier)-SH + 2 reduced [2Fe-2S]-[ferredoxin] + 2 S-adenosyl-L-methionine = (sulfur carrier)-H + biotin + 2 5'-deoxyadenosine + 2 L-methionine + 2 oxidized [2Fe-2S]-[ferredoxin]. It participates in cofactor biosynthesis; biotin biosynthesis; biotin from 7,8-diaminononanoate: step 2/2. Catalyzes the conversion of dethiobiotin (DTB) to biotin by the insertion of a sulfur atom into dethiobiotin via a radical-based mechanism. This is Biotin synthase from Shigella flexneri serotype 5b (strain 8401).